A 377-amino-acid polypeptide reads, in one-letter code: Geranylgeranyl transferase type-1 subunit beta (377 aa).

4 PFTB repeats span residues 144–186 (KEAC…YMLN), 193–234 (MKKA…CLMG), 245–284 (LNRIKRWCIMRQQNGYHGRPNKPVDTCYSFWVGATLKLLK), and 291–333 (FEKN…SLME). Residues 219–221 (HGG) and 263–266 (RPNK) each bind geranylgeranyl diphosphate. 2 residues coordinate Zn(2+): D269 and C271. 272–275 (YSFW) lines the geranylgeranyl diphosphate pocket. H321 lines the Zn(2+) pocket.

It belongs to the protein prenyltransferase subunit beta family. As to quaternary structure, heterodimer of FNTA and PGGT1B. PGGT1B mediates interaction with substrate peptides. Zn(2+) serves as cofactor. Requires Mg(2+) as cofactor.

It carries out the reaction geranylgeranyl diphosphate + L-cysteinyl-[protein] = S-geranylgeranyl-L-cysteinyl-[protein] + diphosphate. Catalyzes the transfer of a geranylgeranyl moiety from geranylgeranyl diphosphate to a cysteine at the fourth position from the C-terminus of proteins with the C-terminal sequence Cys-aliphatic-aliphatic-X. Known substrates include RAC1, RAC2, RAP1A and RAP1B. The protein is Geranylgeranyl transferase type-1 subunit beta (Pggt1b) of Rattus norvegicus (Rat).